The chain runs to 962 residues: Glutamate receptor 1 (962 aa).

The signal sequence occupies residues 1 to 25 (MFSSFSFLNMFGVLFTVFNLTVVQP). Residues 26-591 (YPSHIIIKSF…SVFSFMQPLS (566 aa)) are Extracellular-facing. Asn190, Asn220, Asn275, Asn333, Asn441, and Asn482 each carry an N-linked (GlcNAc...) asparagine glycan. A helical transmembrane segment spans residues 592–612 (TEIWMYIIFAYIGVSVVIFLV). Over 613–668 (SRFSPYEWRVEETSRGGFTISNDFSVYNCLWFTLAAFMQQGTDILPRSISGRIASS) the chain is Cytoplasmic. Residues 669 to 689 (AWWFFTMIIVSSYTANLAAFL) traverse the membrane as a helical segment. The Extracellular segment spans residues 690 to 855 (TLEKMQAPIE…GSSASLNLSK (166 aa)). An N-linked (GlcNAc...) asparagine glycan is attached at Asn852. The chain crosses the membrane as a helical span at residues 856 to 876 (VAGIFYILMGGMVISMLAALG). Topologically, residues 877–962 (EFLYRSRIEA…PANTLYNTAV (86 aa)) are cytoplasmic.

This sequence belongs to the glutamate-gated ion channel (TC 1.A.10.1) family. In terms of assembly, interacts with sol-1. Interacts with cni-1; the interaction negatively regulates export of glr-1 from the endoplasmic reticulum to synapses. Interacts with usp-46; the interaction results in deubiquitination of glr-1. In terms of processing, ubiquitinated. Deubiquitinated by usp-46 which prevents its degradation. Post-translationally, glycosylated. As to expression, command interneurons of the locomotory control circuit (AIB, AVA, AVB, AVD, AVE and PVC) and motor neurons (RMD, RIM, SMD, AVG, PVQ and URY).

The protein resides in the postsynaptic cell membrane. It is found in the endoplasmic reticulum. The protein localises to the synapse. It localises to the cell membrane. Its subcellular location is the recycling endosome. The protein resides in the cell projection. It is found in the dendrite. The protein localises to the perikaryon. Functionally, non-NMDA (N-methyl-D-aspartate) ionotropic glutamate receptor. L-glutamate acts as an excitatory neurotransmitter at many synapses in the central nervous system. The postsynaptic actions of glutamate are mediated by a variety of receptors that are named according to their selective agonists. May contribute to a sensory discrimination between mechanical and chemical stimuli. Plays a role in controlling movement in response to environmental cues such as food availability and mechanosensory stimulation such as the nose touch response. In AIB interneurons, promotes omega turns, a movement that frequently follows backwards locomotion or 'reversals' in response to environmental cues while possibly playing an inhibitory role in alternative neurons to inhibit omega turns. This chain is Glutamate receptor 1, found in Caenorhabditis elegans.